The following is a 37-amino-acid chain: Large ribosomal subunit protein bL36 (37 aa).

Belongs to the bacterial ribosomal protein bL36 family.

The polypeptide is Large ribosomal subunit protein bL36 (Acidithiobacillus ferrooxidans (strain ATCC 23270 / DSM 14882 / CIP 104768 / NCIMB 8455) (Ferrobacillus ferrooxidans (strain ATCC 23270))).